Consider the following 145-residue polypeptide: RNA polymerase-binding transcription factor DksA (145 aa).

The Zn(2+) site is built by cysteine 108, cysteine 111, cysteine 129, and cysteine 132. The segment at 108–132 adopts a dksA C4-type zinc-finger fold; the sequence is CDCCGEEIGIRRLEARPTADLCIDC.

It belongs to the DksA family. In terms of assembly, interacts directly with the RNA polymerase.

Its subcellular location is the cytoplasm. Its function is as follows. Transcription factor that acts by binding directly to the RNA polymerase (RNAP). Required for negative regulation of rRNA expression and positive regulation of several amino acid biosynthesis promoters. Also required for regulation of fis expression. In Haemophilus influenzae (strain ATCC 51907 / DSM 11121 / KW20 / Rd), this protein is RNA polymerase-binding transcription factor DksA.